The following is a 281-amino-acid chain: Tumor necrosis factor ligand superfamily member 10 (281 aa).

Topologically, residues 1-17 are cytoplasmic; that stretch reads MAMMEVQGGPSLGQTCV. The chain crosses the membrane as a helical; Signal-anchor for type II membrane protein span at residues 18–38; sequence LIVIFTVLLQSLCVAVTYVYF. At 39 to 281 the chain is on the extracellular side; it reads TNELKQMQDK…ASFFGAFLVG (243 aa). Residues 122–280 form the THD domain; the sequence is VAAHITGTRG…EASFFGAFLV (159 aa). The tract at residues 124–144 is disordered; sequence AHITGTRGRSNTLSSPNSKNE. Positions 130 to 141 are enriched in polar residues; it reads RGRSNTLSSPNS. A Zn(2+)-binding site is contributed by cysteine 230.

It belongs to the tumor necrosis factor family. Homotrimer. One TNFSF10 homotrimer interacts with three TNFSF10A mononers. One TNFSF10 homotrimer interacts with three TNFSF10B mononers. In terms of processing, tyrosine phosphorylated by PKDCC/VLK. Widespread; most predominant in spleen, lung and prostate.

It is found in the cell membrane. The protein resides in the secreted. Cytokine that binds to TNFRSF10A/TRAILR1, TNFRSF10B/TRAILR2, TNFRSF10C/TRAILR3, TNFRSF10D/TRAILR4 and possibly also to TNFRSF11B/OPG. Induces apoptosis. Its activity may be modulated by binding to the decoy receptors TNFRSF10C/TRAILR3, TNFRSF10D/TRAILR4 and TNFRSF11B/OPG that cannot induce apoptosis. The chain is Tumor necrosis factor ligand superfamily member 10 (TNFSF10) from Homo sapiens (Human).